A 342-amino-acid chain; its full sequence is Phosphate acyltransferase (342 aa).

Belongs to the PlsX family. Homodimer. Probably interacts with PlsY.

The protein localises to the cytoplasm. It carries out the reaction a fatty acyl-[ACP] + phosphate = an acyl phosphate + holo-[ACP]. It functions in the pathway lipid metabolism; phospholipid metabolism. In terms of biological role, catalyzes the reversible formation of acyl-phosphate (acyl-PO(4)) from acyl-[acyl-carrier-protein] (acyl-ACP). This enzyme utilizes acyl-ACP as fatty acyl donor, but not acyl-CoA. This is Phosphate acyltransferase from Pelotomaculum thermopropionicum (strain DSM 13744 / JCM 10971 / SI).